We begin with the raw amino-acid sequence, 185 residues long: Ribosome-recycling factor (185 aa).

Belongs to the RRF family.

The protein resides in the cytoplasm. Functionally, responsible for the release of ribosomes from messenger RNA at the termination of protein biosynthesis. May increase the efficiency of translation by recycling ribosomes from one round of translation to another. The sequence is that of Ribosome-recycling factor from Saccharopolyspora erythraea (strain ATCC 11635 / DSM 40517 / JCM 4748 / NBRC 13426 / NCIMB 8594 / NRRL 2338).